Reading from the N-terminus, the 389-residue chain is MAFTGDELARMLQFKDKMISSAGLALKFEKVVQEAMASGIVLQHITCIKVRICDNSDILSDRQLRSLLINGLYPFEGRMSMFGVTEEWEGASAAPERQVVFLLSSTGQVLGYEDGVVFYLSPTFSDFWTTAMEFSCQNAILSNFIAQKSRDEYIDQFQKYFTRMRHTPIFLTGVLPRRFQKVESSACVEEDARASMRPIQCDSFGVKDTFCRPTEELLQPSANKDVGGKVCMSLSCREDNSARHCTIYGLTETRGIKIMFSRHTQTDRSEVMCNAATQTGDVVDNSSETLFLGKNLVHQSILETEVKTTAKNTFDVSNPRIDSVYDTTVFGAMATDDVGCENVQGGASLAQEKPLKGYCITATPSECKPNIHWLKSPEKTVQESAAVLR.

The protein belongs to the beta-herpesvirinae UL38 protein family. In terms of assembly, interacts with host MDM2; this interaction leads to the stabilization of host TP53.

Its subcellular location is the host cytoplasm. The protein resides in the host nucleus. Functionally, plays a role in the inhibition of host apoptosis to facilitate efficient viral replication. Promotes stabilization and inactivation of host TP53 through interaction with host MDM2. The polypeptide is Apoptosis inhibitor U19 (U19) (Human herpesvirus 6A (strain Uganda-1102) (HHV-6 variant A)).